Consider the following 238-residue polypeptide: Probable transcriptional regulatory protein SAK_1658 (238 aa).

Belongs to the TACO1 family. YeeN subfamily.

It is found in the cytoplasm. This chain is Probable transcriptional regulatory protein SAK_1658, found in Streptococcus agalactiae serotype Ia (strain ATCC 27591 / A909 / CDC SS700).